Here is a 509-residue protein sequence, read N- to C-terminus: Maturase K (509 aa).

The protein belongs to the intron maturase 2 family. MatK subfamily.

The protein localises to the plastid. It localises to the chloroplast. Its function is as follows. Usually encoded in the trnK tRNA gene intron. Probably assists in splicing its own and other chloroplast group II introns. The polypeptide is Maturase K (Amentotaxus argotaenia (Chinese flowering yew)).